The primary structure comprises 222 residues: uncharacterized protein (222 aa).

4 helical membrane passes run 25–45, 80–100, 111–131, and 160–180; these read LLWL…PATA, LLGA…ALIY, FAIM…FPLL, and LALT…VPFF.

The protein localises to the cell membrane. This is an uncharacterized protein from Bacillus subtilis (strain 168).